A 24-amino-acid chain; its full sequence is TVKXQLSMVLDLNKEIGGQTXTAA.

Heterotrimer of alpha, beta and gamma subunits. [3Fe-4S] cluster is required as a cofactor. It depends on [4Fe-4S] cluster as a cofactor.

The protein localises to the cytoplasm. Functionally, electron transfer subunit of the chlorate reductase. In Stutzerimonas chloritidismutans (Pseudomonas chloritidismutans), this protein is Chlorate reductase subunit beta.